Reading from the N-terminus, the 82-residue chain is Consomatin Ro2 (82 aa).

A signal peptide spans 1-22 (MQTAYWLMVMMMVWITAPLYEG). Residues 23–57 (GKPNDVIRGLVPDDLTPQFILRSLISRRRSDKDVR) constitute a propeptide that is removed on maturation. An intrachain disulfide couples C62 to C68. Position 64 is a D-tryptophan (W64). Residues P69 and P70 each carry the 4-hydroxyproline modification. Positions 72-82 (LWRRHDRKGKD) are excised as a propeptide.

The protein belongs to the conotoxin C superfamily. Consomatin family. Expressed by the venom duct.

The protein resides in the secreted. Functionally, moderately activates human somatostatin receptors (SSTR) with a preferential activation of SSTR1 and SSTR4. In vivo, does not cause behavioral changes in mice within a few minutes of intracranial injection, but causes a progressive loss of movement thereafter. Four to five hours after injection, mice recover, even with the highest dose tested. Shows antinociception and antihyperalgesia activities in two mouse models of acute pain, most probably by acting outside the central nervous system. This is Consomatin Ro2 from Conus rolani (Cone snail).